The chain runs to 258 residues: Hydroxyacylglutathione hydrolase (258 aa).

The Zn(2+) site is built by His-52, His-54, Asp-56, His-57, His-109, Asp-126, and His-164.

The protein belongs to the metallo-beta-lactamase superfamily. Glyoxalase II family. In terms of assembly, monomer. The cofactor is Zn(2+).

It catalyses the reaction an S-(2-hydroxyacyl)glutathione + H2O = a 2-hydroxy carboxylate + glutathione + H(+). It functions in the pathway secondary metabolite metabolism; methylglyoxal degradation; (R)-lactate from methylglyoxal: step 2/2. Functionally, thiolesterase that catalyzes the hydrolysis of S-D-lactoyl-glutathione to form glutathione and D-lactic acid. The polypeptide is Hydroxyacylglutathione hydrolase (Xylella fastidiosa (strain 9a5c)).